A 542-amino-acid polypeptide reads, in one-letter code: MACNDVDKSSFDDVCCDSGHSSCAAAMEKERESFLSPTENPSTISVSSSMPPDQQGYDVEFDPPLESKYECPICLMGLRSAVQTPCGHRFCDSCIRKSIRDTGQKCPVDNEVLLEEQLFPDNFAKREILSLTVKCSNFGCSEKMELRQLEKHLSQCRFATAPCPQCQESVPISHLDEHKSQHCLQRIMTCPDCAGSFVYAVKQNHEQFCPFANTVCEYCEMELIRDQLALHCDTDCLKAPVACTFSTFGCREKMTRNELAQHMQEFTQMHMRYMAEFLRSQTLNNCTMPSAAAHLSSDDRGASARSPDSCQCKQELLNLRETVLELEGRLVRQDQQIRELCIHNDTQKNQVTELRRKLVSLEESTRELEAQQYQGIYVWRVENFSHHLRNQEAGQPIVLHSPPFYTGRPGYKLCLRLHLQTPSAPRCSNFISLFVHTMQGEFDSQLSWPLQGTIRLAVLDQVEGQHHIEVMETKPDLQAFQRPTVMRNPKGFGYVTFLHLQALRQRGFVKEDVLLVRCEVTPRFDASLRREGVQPRGPEPSI.

The interval 32-54 is disordered; the sequence is ESFLSPTENPSTISVSSSMPPDQ. Residues 35 to 52 show a composition bias toward polar residues; it reads LSPTENPSTISVSSSMPP. The RING-type; degenerate zinc-finger motif lies at 71-110; it reads CPICLMGLRSAVQTPCGHRFCDSCIRKSIRDTGQKCPVDN. 2 consecutive TRAF-type zinc fingers follow at residues 151 to 203 and 204 to 260; these read KHLS…AVKQ and NHEQ…NELA. Positions 311–373 form a coiled coil; it reads QCKQELLNLR…STRELEAQQY (63 aa). One can recognise an MATH domain in the interval 374-520; it reads QGIYVWRVEN…EDVLLVRCEV (147 aa). 489–496 provides a ligand contact to substrate; that stretch reads PKGFGYVT.

It belongs to the TNF receptor-associated factor family. A subfamily. In terms of assembly, homotrimer. Homooligomer.

It localises to the cytoplasm. The protein localises to the cell cortex. The protein resides in the nucleus. Its subcellular location is the lipid droplet. The catalysed reaction is S-ubiquitinyl-[E2 ubiquitin-conjugating enzyme]-L-cysteine + [acceptor protein]-L-lysine = [E2 ubiquitin-conjugating enzyme]-L-cysteine + N(6)-ubiquitinyl-[acceptor protein]-L-lysine.. The protein operates within protein modification; protein ubiquitination. Its function is as follows. E3 ubiquitin ligase that, together with UBE2N and UBE2V1, mediates the synthesis of 'Lys-63'-linked-polyubiquitin chains conjugated to proteins, such as IKBKG, IRAK1, AKT1 and AKT2. Also mediates ubiquitination of free/unanchored polyubiquitin chain that leads to MAP3K7 activation. In Danio rerio (Zebrafish), this protein is TNF receptor-associated factor 6 (traf6).